Here is a 429-residue protein sequence, read N- to C-terminus: MFS-type efflux pump MSMEG_3705 (429 aa).

12 helical membrane-spanning segments follow: residues 21–41 (AWAA…DRFL), 59–79 (AIGV…GIAV), 86–106 (GAFG…TMLG), 115–137 (LALT…HAYV), 150–170 (LAVI…GGGL), 181–201 (FVIM…VVGV), 228–248 (FLIV…LTTF), 264–284 (VGVE…LIVG), 299–319 (LWIV…AFVV), 327–347 (LFLA…IAAI), 361–381 (AMFL…VGML), and 397–417 (ALLL…WLAS).

This sequence belongs to the major facilitator superfamily.

It is found in the cell inner membrane. In terms of biological role, probably plays a role in bacterial growth and resistance to antibiotics. The polypeptide is MFS-type efflux pump MSMEG_3705 (Mycolicibacterium smegmatis (strain ATCC 700084 / mc(2)155) (Mycobacterium smegmatis)).